Reading from the N-terminus, the 143-residue chain is Nucleoside diphosphate kinase (143 aa).

The ATP site is built by lysine 11, phenylalanine 59, arginine 87, threonine 93, arginine 104, and asparagine 114. The active-site Pros-phosphohistidine intermediate is the histidine 117.

It belongs to the NDK family. As to quaternary structure, homotetramer. It depends on Mg(2+) as a cofactor.

The protein localises to the cytoplasm. The catalysed reaction is a 2'-deoxyribonucleoside 5'-diphosphate + ATP = a 2'-deoxyribonucleoside 5'-triphosphate + ADP. It carries out the reaction a ribonucleoside 5'-diphosphate + ATP = a ribonucleoside 5'-triphosphate + ADP. Major role in the synthesis of nucleoside triphosphates other than ATP. The ATP gamma phosphate is transferred to the NDP beta phosphate via a ping-pong mechanism, using a phosphorylated active-site intermediate. The sequence is that of Nucleoside diphosphate kinase from Clostridium perfringens (strain ATCC 13124 / DSM 756 / JCM 1290 / NCIMB 6125 / NCTC 8237 / Type A).